The chain runs to 113 residues: Protein FMC1 homolog (113 aa).

Positions 94 to 113 (SAGLVGLKLPHQPGGKGWEP) are disordered.

It belongs to the FMC1 family. Interacts with ATPAF2.

The protein resides in the mitochondrion. In terms of biological role, plays a role in the assembly/stability of the mitochondrial membrane ATP synthase (F(1)F(0) ATP synthase or Complex V). The chain is Protein FMC1 homolog from Homo sapiens (Human).